Reading from the N-terminus, the 310-residue chain is ADP-L-glycero-D-manno-heptose-6-epimerase (310 aa).

NADP(+) contacts are provided by residues 10 to 11, 31 to 32, K38, K53, 75 to 79, and N92; these read FI, DN, and EGACS. The Proton acceptor role is filled by Y140. An NADP(+)-binding site is contributed by K144. Residue N169 coordinates substrate. NADP(+) is bound by residues V170 and K178. K178 serves as the catalytic Proton acceptor. Substrate is bound by residues S180, H187, 201–204, R209, and Y272; that span reads FEGS.

This sequence belongs to the NAD(P)-dependent epimerase/dehydratase family. HldD subfamily. In terms of assembly, homopentamer. NADP(+) is required as a cofactor.

The enzyme catalyses ADP-D-glycero-beta-D-manno-heptose = ADP-L-glycero-beta-D-manno-heptose. The protein operates within nucleotide-sugar biosynthesis; ADP-L-glycero-beta-D-manno-heptose biosynthesis; ADP-L-glycero-beta-D-manno-heptose from D-glycero-beta-D-manno-heptose 7-phosphate: step 4/4. Functionally, catalyzes the interconversion between ADP-D-glycero-beta-D-manno-heptose and ADP-L-glycero-beta-D-manno-heptose via an epimerization at carbon 6 of the heptose. This is ADP-L-glycero-D-manno-heptose-6-epimerase from Klebsiella pneumoniae subsp. pneumoniae (strain ATCC 700721 / MGH 78578).